A 304-amino-acid chain; its full sequence is Type II methyltransferase M.HindV (304 aa).

One can recognise an SAM-dependent MTase C5-type domain in the interval 1-299 (MKCVDLFSGC…SAIINFEKEP (299 aa)). C75 is a catalytic residue.

The protein belongs to the class I-like SAM-binding methyltransferase superfamily. C5-methyltransferase family.

The catalysed reaction is a 2'-deoxycytidine in DNA + S-adenosyl-L-methionine = a 5-methyl-2'-deoxycytidine in DNA + S-adenosyl-L-homocysteine + H(+). Its function is as follows. A methylase, recognizes the double-stranded sequence 5'-GRCGYC-3', methylates C-? on both strands, and protects the DNA from cleavage by the HindV endonuclease. This Haemophilus influenzae (strain ATCC 51907 / DSM 11121 / KW20 / Rd) protein is Type II methyltransferase M.HindV (hindVM).